We begin with the raw amino-acid sequence, 95 residues long: Aspartyl/glutamyl-tRNA(Asn/Gln) amidotransferase subunit C (95 aa).

Belongs to the GatC family. As to quaternary structure, heterotrimer of A, B and C subunits.

The enzyme catalyses L-glutamyl-tRNA(Gln) + L-glutamine + ATP + H2O = L-glutaminyl-tRNA(Gln) + L-glutamate + ADP + phosphate + H(+). The catalysed reaction is L-aspartyl-tRNA(Asn) + L-glutamine + ATP + H2O = L-asparaginyl-tRNA(Asn) + L-glutamate + ADP + phosphate + 2 H(+). Allows the formation of correctly charged Asn-tRNA(Asn) or Gln-tRNA(Gln) through the transamidation of misacylated Asp-tRNA(Asn) or Glu-tRNA(Gln) in organisms which lack either or both of asparaginyl-tRNA or glutaminyl-tRNA synthetases. The reaction takes place in the presence of glutamine and ATP through an activated phospho-Asp-tRNA(Asn) or phospho-Glu-tRNA(Gln). This chain is Aspartyl/glutamyl-tRNA(Asn/Gln) amidotransferase subunit C, found in Prochlorococcus marinus (strain NATL1A).